Consider the following 308-residue polypeptide: Ornithine carbamoyltransferase (308 aa).

Carbamoyl phosphate is bound by residues 53–56, Q80, R104, and 131–134; these read STRT and HPCQ. Residues N162, D225, and 229–230 each bind L-ornithine; that span reads SM. Residues 265-266 and R293 contribute to the carbamoyl phosphate site; that span reads CL.

Belongs to the aspartate/ornithine carbamoyltransferase superfamily. OTCase family.

The protein resides in the cytoplasm. It catalyses the reaction carbamoyl phosphate + L-ornithine = L-citrulline + phosphate + H(+). Its pathway is amino-acid biosynthesis; L-arginine biosynthesis; L-arginine from L-ornithine and carbamoyl phosphate: step 1/3. Its function is as follows. Reversibly catalyzes the transfer of the carbamoyl group from carbamoyl phosphate (CP) to the N(epsilon) atom of ornithine (ORN) to produce L-citrulline. The chain is Ornithine carbamoyltransferase (argF) from Synechocystis sp. (strain ATCC 27184 / PCC 6803 / Kazusa).